The chain runs to 155 residues: Protein U1 (155 aa).

The protein belongs to the nanovirus U1 protein family.

This is Protein U1 (DNA-U1) from Cicer arietinum (Chickpea).